Consider the following 1252-residue polypeptide: DNA-directed RNA polymerase subunit beta (1252 aa).

It belongs to the RNA polymerase beta chain family. The RNAP catalytic core consists of 2 alpha, 1 beta, 1 beta' and 1 omega subunit. When a sigma factor is associated with the core the holoenzyme is formed, which can initiate transcription.

It catalyses the reaction RNA(n) + a ribonucleoside 5'-triphosphate = RNA(n+1) + diphosphate. DNA-dependent RNA polymerase catalyzes the transcription of DNA into RNA using the four ribonucleoside triphosphates as substrates. The polypeptide is DNA-directed RNA polymerase subunit beta (Chlamydia felis (strain Fe/C-56) (Chlamydophila felis)).